The primary structure comprises 560 residues: Membrane protein insertase YidC (560 aa).

The next 6 helical transmembrane spans lie at 5 to 25 (IINLIAAVVLSLSIIFGWQYF), 334 to 354 (AIDFGWFYIITKPVFYAMNFF), 357 to 377 (YVGNFGISILIVTVIIKLLMF), 431 to 451 (LPILVQIPVFFSIYKVLYVTI), 476 to 496 (LFGLLPFAPPSFLMIGAWPIL), and 522 to 542 (FMPLIFLFMFSSFPVGLLIYW).

It belongs to the OXA1/ALB3/YidC family. Type 1 subfamily. Interacts with the Sec translocase complex via SecD. Specifically interacts with transmembrane segments of nascent integral membrane proteins during membrane integration.

The protein localises to the cell inner membrane. Required for the insertion and/or proper folding and/or complex formation of integral membrane proteins into the membrane. Involved in integration of membrane proteins that insert both dependently and independently of the Sec translocase complex, as well as at least some lipoproteins. Aids folding of multispanning membrane proteins. This Rickettsia prowazekii (strain Madrid E) protein is Membrane protein insertase YidC.